The chain runs to 695 residues: N-terminal acetyltransferase A complex subunit-like protein C418.02 (695 aa).

10 TPR repeats span residues 8 to 41 (EAFL…KPKH), 43 to 75 (DSVA…DPKS), 76 to 109 (QFCW…SPNN), 111 to 143 (SLWY…DSSN), 145 to 177 (EYRL…CNLS), 217 to 250 (FNFE…FPNR), 262 to 296 (WNFY…GISV), 365 to 398 (LWCT…TPTY), 399 to 432 (PELF…DKSD), and 477 to 510 (VWFL…YKKW).

Component of the N-terminal acetyltransferase A (NatA) complex.

It is found in the cytoplasm. The protein resides in the nucleus. Functionally, non-catalytic component of the NatA N-terminal acetyltransferase, which catalyzes acetylation of proteins beginning with Met-Ser, Met-Gly and Met-Ala. N-acetylation plays a role in normal eukaryotic translation and processing, protect against proteolytic degradation and protein turnover. The protein is N-terminal acetyltransferase A complex subunit-like protein C418.02 of Schizosaccharomyces pombe (strain 972 / ATCC 24843) (Fission yeast).